Consider the following 420-residue polypeptide: Serine--tRNA ligase (420 aa).

229–231 (TAE) lines the L-serine pocket. 260 to 262 (RAE) contributes to the ATP binding site. E283 contacts L-serine. Residue 347 to 350 (EISS) coordinates ATP. S382 contributes to the L-serine binding site.

This sequence belongs to the class-II aminoacyl-tRNA synthetase family. Type-1 seryl-tRNA synthetase subfamily. As to quaternary structure, homodimer. The tRNA molecule binds across the dimer.

The protein localises to the cytoplasm. The catalysed reaction is tRNA(Ser) + L-serine + ATP = L-seryl-tRNA(Ser) + AMP + diphosphate + H(+). The enzyme catalyses tRNA(Sec) + L-serine + ATP = L-seryl-tRNA(Sec) + AMP + diphosphate + H(+). It participates in aminoacyl-tRNA biosynthesis; selenocysteinyl-tRNA(Sec) biosynthesis; L-seryl-tRNA(Sec) from L-serine and tRNA(Sec): step 1/1. In terms of biological role, catalyzes the attachment of serine to tRNA(Ser). Is also able to aminoacylate tRNA(Sec) with serine, to form the misacylated tRNA L-seryl-tRNA(Sec), which will be further converted into selenocysteinyl-tRNA(Sec). The protein is Serine--tRNA ligase of Caldicellulosiruptor bescii (strain ATCC BAA-1888 / DSM 6725 / KCTC 15123 / Z-1320) (Anaerocellum thermophilum).